A 127-amino-acid chain; its full sequence is Large ribosomal subunit protein eL18 (127 aa).

It belongs to the eukaryotic ribosomal protein eL18 family.

This is Large ribosomal subunit protein eL18 from Methanopyrus kandleri (strain AV19 / DSM 6324 / JCM 9639 / NBRC 100938).